Here is a 1461-residue protein sequence, read N- to C-terminus: Pleiotropic drug resistance protein 2 (1461 aa).

In terms of domain architecture, ABC transporter 1 spans 172–445 (LGLIHLSPSK…FEYMGFRCPE (274 aa)). 205-212 (GPPGSGKT) contributes to the ATP binding site. One can recognise an ABC transmembrane type-2 1 domain in the interval 523–736 (ELFKSCFTRE…GQNAIAINEF (214 aa)). 6 helical membrane passes run 541–561 (FLYIFKTTQITIMATIALTVF), 577–597 (FWGALFFSLINVMFNGMQELA), 622–642 (LPIWVLKIPISLVESAIWIIL), 660–680 (LLAFIGVHQMALSLFRFIAAA), 685–705 (VVANTLGTFTLLMVFILGGFI), and 771–791 (ISIGALFGFSLLFNVLFIAAL). Residues 859–1111 (LAFNHVNYYV…KLVEYFETIP (253 aa)) enclose the ABC transporter 2 domain. 904 to 911 (GVSGAGKT) lines the ATP pocket. The 215-residue stretch at 1184-1398 (TQCKACFWKQ…TIYGIFASQV (215 aa)) folds into the ABC transmembrane type-2 2 domain. The next 7 helical transmembrane spans lie at 1203–1223 (YNAIRFFMTVIIGILFGVIFW), 1243–1263 (YAAVMFLGATNASAVQSVVAI), 1291–1311 (TIYVAIQTFVYSLLLFSMIGY), 1321–1341 (FYYFIFMCFTYFSMYGMMVVA), 1348–1368 (IAAIVMSFFLSFWNLFSGFLI), 1379–1399 (WYYWASPVAWTIYGIFASQVG), and 1430–1450 (FLLVVVFAHVGWVLLFFFVFA).

The protein belongs to the ABC transporter superfamily. ABCG family. PDR (TC 3.A.1.205) subfamily.

It localises to the membrane. Its function is as follows. May be a general defense protein. This is Pleiotropic drug resistance protein 2 (PDR2) from Nicotiana plumbaginifolia (Leadwort-leaved tobacco).